Consider the following 233-residue polypeptide: Octanoyltransferase (233 aa).

The region spanning 33–216 is the BPL/LPL catalytic domain; it reads GRAQDTVILL…HLVRALSSNG (184 aa). Substrate-binding positions include 71-78, 146-148, and 159-161; these read RGGRITWH, AIG, and GFA. Catalysis depends on cysteine 177, which acts as the Acyl-thioester intermediate.

The protein belongs to the LipB family.

It localises to the cytoplasm. It carries out the reaction octanoyl-[ACP] + L-lysyl-[protein] = N(6)-octanoyl-L-lysyl-[protein] + holo-[ACP] + H(+). It participates in protein modification; protein lipoylation via endogenous pathway; protein N(6)-(lipoyl)lysine from octanoyl-[acyl-carrier-protein]: step 1/2. Its function is as follows. Catalyzes the transfer of endogenously produced octanoic acid from octanoyl-acyl-carrier-protein onto the lipoyl domains of lipoate-dependent enzymes. Lipoyl-ACP can also act as a substrate although octanoyl-ACP is likely to be the physiological substrate. The protein is Octanoyltransferase of Clavibacter michiganensis subsp. michiganensis (strain NCPPB 382).